The primary structure comprises 184 residues: UPF0398 protein BAA_1648 (184 aa).

It belongs to the UPF0398 family.

The polypeptide is UPF0398 protein BAA_1648 (Bacillus anthracis (strain A0248)).